Consider the following 396-residue polypeptide: Tryptophan synthase beta chain (396 aa).

Position 86 is an N6-(pyridoxal phosphate)lysine (Lys-86).

Belongs to the TrpB family. In terms of assembly, tetramer of two alpha and two beta chains. Pyridoxal 5'-phosphate serves as cofactor.

The enzyme catalyses (1S,2R)-1-C-(indol-3-yl)glycerol 3-phosphate + L-serine = D-glyceraldehyde 3-phosphate + L-tryptophan + H2O. It functions in the pathway amino-acid biosynthesis; L-tryptophan biosynthesis; L-tryptophan from chorismate: step 5/5. Its function is as follows. The beta subunit is responsible for the synthesis of L-tryptophan from indole and L-serine. The protein is Tryptophan synthase beta chain of Sodalis glossinidius (strain morsitans).